Reading from the N-terminus, the 311-residue chain is ADP-L-glycero-D-manno-heptose-6-epimerase (311 aa).

NADP(+)-binding positions include 10-11 (FI), 31-32 (DD), Lys38, Lys53, 75-79 (EGACS), and Asn92. Tyr139 acts as the Proton acceptor in catalysis. Lys143 provides a ligand contact to NADP(+). Asn174 is a substrate binding site. NADP(+) is bound by residues Val175 and Lys183. The Proton acceptor role is filled by Lys183. Residues Ser185, His192, 206–209 (FEGE), Arg212, and Tyr275 each bind substrate.

It belongs to the NAD(P)-dependent epimerase/dehydratase family. HldD subfamily. As to quaternary structure, homopentamer. It depends on NADP(+) as a cofactor.

It carries out the reaction ADP-D-glycero-beta-D-manno-heptose = ADP-L-glycero-beta-D-manno-heptose. Its pathway is nucleotide-sugar biosynthesis; ADP-L-glycero-beta-D-manno-heptose biosynthesis; ADP-L-glycero-beta-D-manno-heptose from D-glycero-beta-D-manno-heptose 7-phosphate: step 4/4. Catalyzes the interconversion between ADP-D-glycero-beta-D-manno-heptose and ADP-L-glycero-beta-D-manno-heptose via an epimerization at carbon 6 of the heptose. This is ADP-L-glycero-D-manno-heptose-6-epimerase from Psychromonas ingrahamii (strain DSM 17664 / CCUG 51855 / 37).